The primary structure comprises 594 residues: Glutamate decarboxylase 1 (594 aa).

Residues 1 to 13 show a composition bias toward low complexity; that stretch reads MASSTPSSSATSS. A disordered region spans residues 1-23; it reads MASSTPSSSATSSNAGADPNTTN. Serine 78 is subject to Phosphoserine. Residue 190-192 coordinates 4-aminobutanoate; the sequence is QLS. The residue at position 405 (lysine 405) is an N6-(pyridoxal phosphate)lysine. Arginine 567 lines the 4-aminobutanoate pocket.

This sequence belongs to the group II decarboxylase family. As to quaternary structure, homodimer. Pyridoxal 5'-phosphate is required as a cofactor.

It carries out the reaction L-glutamate + H(+) = 4-aminobutanoate + CO2. Catalyzes the synthesis of the inhibitory neurotransmitter gamma-aminobutyric acid (GABA) with pyridoxal 5'-phosphate as cofactor. In Pan troglodytes (Chimpanzee), this protein is Glutamate decarboxylase 1 (GAD1).